The primary structure comprises 792 residues: MKYNQYAYVETSPEKATEELLAINFLPENYSSLSFSELLAVLTGNVLAEATTRQAKDAKLAEFAVDDQTDLAAFLLDTPTAITASQFANVALQLLGYHPNYDYSLTDPLTCGKKHALPAFKDLTSKEELIFTFYRLLNTRSKNGQILLDVMAGKGYFTQFWGEGKFMFFNGKSLPVFDTSQVIREVVYVQSDLDTDGDGKGDLLPVTVFRPVESQDQLKVPALYTASPYFGGIIDNVKTNHNVDENLTDATTWTNPKYVAKPLVKSPAPSDQDVPATELATGQSSYGLNEYLLARGFASVFSGAIGNRHGDGIRITGSPEETISQKEVIEWLTGDRVAYTDRTRRFETKASWCSGNVGMTGRSYLGTLQIAIATTGVKGLKTVVSEAAISSWYDYYREHGLVVAPSECQGEDMDKLAEVCQSNLWDGGNFTAKKAYEAEQAELLAAQDRATGQYSDFWESRNYRHHTDGIKCSWISVHGLNDWNVKPKNVYKIWQKVKQLPVKSHLFLHQGPHYNMNNLVSIDFTDLMNLWFVHELLEVENGAYEQWPKVMIQDNLEADEWHAESDWASDLGQASLYLPTADGDLSTVENGTGQLTFTDLGGTEFKKAGISETDWEYQFISGEEKWAKASLRFESEEFLHPTTLVGRPKVRVRVAANKTVGQLSVALVDLGTRQRLTATPKIFARGNQPFGYRFGADSLQEFVPDKATKAKLITKAHMNLQNYQDMKQPSKLEAGQFVDLEFELQPTYYTLPAGAKLGLIIYSTDQGMTKRPLETEDYTVDLAGTALLLYRK.

Active-site charge relay system residues include serine 363, aspartate 482, and histidine 513.

The protein belongs to the peptidase S15 family. As to quaternary structure, homodimer.

The protein localises to the cytoplasm. The catalysed reaction is Hydrolyzes Xaa-Pro-|- bonds to release unblocked, N-terminal dipeptides from substrates including Ala-Pro-|-p-nitroanilide and (sequentially) Tyr-Pro-|-Phe-Pro-|-Gly-Pro-|-Ile.. Functionally, removes N-terminal dipeptides sequentially from polypeptides having unsubstituted N-termini provided that the penultimate residue is proline. In Lactobacillus delbrueckii subsp. lactis, this protein is Xaa-Pro dipeptidyl-peptidase (pepX).